The primary structure comprises 150 residues: SsrA-binding protein (150 aa).

The protein belongs to the SmpB family.

It is found in the cytoplasm. Its function is as follows. Required for rescue of stalled ribosomes mediated by trans-translation. Binds to transfer-messenger RNA (tmRNA), required for stable association of tmRNA with ribosomes. tmRNA and SmpB together mimic tRNA shape, replacing the anticodon stem-loop with SmpB. tmRNA is encoded by the ssrA gene; the 2 termini fold to resemble tRNA(Ala) and it encodes a 'tag peptide', a short internal open reading frame. During trans-translation Ala-aminoacylated tmRNA acts like a tRNA, entering the A-site of stalled ribosomes, displacing the stalled mRNA. The ribosome then switches to translate the ORF on the tmRNA; the nascent peptide is terminated with the 'tag peptide' encoded by the tmRNA and targeted for degradation. The ribosome is freed to recommence translation, which seems to be the essential function of trans-translation. The protein is SsrA-binding protein of Campylobacter jejuni subsp. doylei (strain ATCC BAA-1458 / RM4099 / 269.97).